We begin with the raw amino-acid sequence, 380 residues long: Lipid-A-disaccharide synthase (380 aa).

It belongs to the LpxB family.

The enzyme catalyses a lipid X + a UDP-2-N,3-O-bis[(3R)-3-hydroxyacyl]-alpha-D-glucosamine = a lipid A disaccharide + UDP + H(+). The protein operates within bacterial outer membrane biogenesis; LPS lipid A biosynthesis. Functionally, condensation of UDP-2,3-diacylglucosamine and 2,3-diacylglucosamine-1-phosphate to form lipid A disaccharide, a precursor of lipid A, a phosphorylated glycolipid that anchors the lipopolysaccharide to the outer membrane of the cell. The sequence is that of Lipid-A-disaccharide synthase from Pseudomonas syringae pv. tomato (strain ATCC BAA-871 / DC3000).